Reading from the N-terminus, the 469-residue chain is Acyltransferase clz18 (469 aa).

7 helical membrane passes run 21 to 41 (GLLS…LGYD), 70 to 90 (LFTI…CLFF), 134 to 154 (LSLL…TGFF), 253 to 273 (ILAA…PLFW), 346 to 366 (GLIV…LYSL), 391 to 411 (IYLI…SWVW), and 424 to 444 (VGFG…AAIF).

This sequence belongs to the acyltransferase 3 family.

It is found in the membrane. It participates in secondary metabolite biosynthesis. In terms of biological role, acyltransferase; part of the gene cluster that mediates the biosynthesis of squalestatin S1 (SQS1, also known as zaragozic acid A), a heavily oxidized fungal polyketide that offers potent cholesterol lowering activity by targeting squalene synthase (SS). SQS1 is composed of a 2,8-dioxobicyclic[3.2.1]octane-3,4,5-tricarboxyclic acid core that is connected to two lipophilic polyketide arms. These initial steps feature the priming of an unusual benzoic acid starter unit onto the highly reducing polyketide synthase clz14, followed by oxaloacetate extension and product release to generate a tricarboxylic acid containing product. The phenylalanine ammonia lyase (PAL) clz10 and the acyl-CoA ligase clz12 are involved in transforming phenylalanine into benzoyl-CoA. The citrate synthase-like protein clz17 is involved in connecting the C-alpha-carbons of the hexaketide chain and oxaloacetate to afford the tricarboxylic acid unit. The potential hydrolytic enzymes, clz11 and clz13, are in close proximity to pks2 and may participate in product release. On the other side, the tetraketide arm is synthesized by a the squalestatin tetraketide synthase clz2 and enzymatically esterified to the core in the last biosynthetic step, by the acetyltransferase clz6. The biosynthesis of the tetraketide must involve 3 rounds of chain extension. After the first and second rounds methyl-transfer occurs, and in all rounds of extension the ketoreductase and dehydratase are active. The enoyl reductase and C-MeT of clz2 are not active in the final round of extension. The acetyltransferase clz6 appears to have a broad substrate selectivity for its acyl CoA substrate, allowing the in vitro synthesis of novel squalestatins. The biosynthesis of SQS1 requires several oxidative steps likely performed by oxidoreductases clz3, clz15 and clz16. Finally, in support of the identification of the cluster as being responsible for SQS1 production, the cluster contains a gene encoding a putative squalene synthase (SS) clz20, suggesting a likely mechanism for self-resistance. The polypeptide is Acyltransferase clz18 (Cochliobolus lunatus (Filamentous fungus)).